The chain runs to 67 residues: Large ribosomal subunit protein uL29 (67 aa).

It belongs to the universal ribosomal protein uL29 family.

This is Large ribosomal subunit protein uL29 from Ehrlichia canis (strain Jake).